The following is a 338-amino-acid chain: Methionine import ATP-binding protein MetN 2 (338 aa).

The ABC transporter domain occupies 2–242 (IEIEKVCVDF…PQHAFTQQLV (241 aa)). 39-46 (GTSGAGKS) contacts ATP.

This sequence belongs to the ABC transporter superfamily. Methionine importer (TC 3.A.1.24) family. The complex is composed of two ATP-binding proteins (MetN), two transmembrane proteins (MetI) and a solute-binding protein (MetQ).

The protein resides in the cell inner membrane. It catalyses the reaction L-methionine(out) + ATP + H2O = L-methionine(in) + ADP + phosphate + H(+). The catalysed reaction is D-methionine(out) + ATP + H2O = D-methionine(in) + ADP + phosphate + H(+). Its function is as follows. Part of the ABC transporter complex MetNIQ involved in methionine import. Responsible for energy coupling to the transport system. The protein is Methionine import ATP-binding protein MetN 2 of Salmonella paratyphi A (strain ATCC 9150 / SARB42).